A 277-amino-acid polypeptide reads, in one-letter code: Deoxyguanosine kinase, mitochondrial (277 aa).

Residues 1 to 39 (MAAGRFLLRRLRASFRSPLRNALVDAPHARAMHDGGGPR) constitute a mitochondrion transit peptide. Residue 45–53 (GNIAVGKST) coordinates ATP. Substrate-binding residues include glutamate 70, tyrosine 100, glutamine 111, and arginine 118. Glutamate 141 (proton acceptor) is an active-site residue. Residues arginine 142 and aspartate 147 each contribute to the substrate site. 206–208 (RDR) contributes to the ATP binding site. Residue glutamate 211 participates in substrate binding. 254 to 256 (EDF) is a binding site for ATP.

This sequence belongs to the DCK/DGK family. As to quaternary structure, homodimer. As to expression, spleen and thymus. Expressed at much lower levels in the brain and liver.

Its subcellular location is the mitochondrion. The protein resides in the cytoplasm. It carries out the reaction 2'-deoxyguanosine + ATP = dGMP + ADP + H(+). It catalyses the reaction 2'-deoxyadenosine + ATP = dAMP + ADP + H(+). Phosphorylates deoxyguanosine and deoxyadenosine in the mitochondrial matrix, with the highest efficiency for deoxyguanosine. In non-replicating cells, where cytosolic dNTP synthesis is down-regulated, mtDNA synthesis depends solely on DGUOK and TK2. Phosphorylates certain nucleoside analogs. Widely used as target of antiviral and chemotherapeutic agents. This Mus musculus (Mouse) protein is Deoxyguanosine kinase, mitochondrial (Dguok).